We begin with the raw amino-acid sequence, 185 residues long: ATP synthase subunit b, chloroplastic (185 aa).

A helical transmembrane segment spans residues 27–49 (LATNPINLSVVLGVLVFFGKGVL).

It belongs to the ATPase B chain family. F-type ATPases have 2 components, F(1) - the catalytic core - and F(0) - the membrane proton channel. F(1) has five subunits: alpha(3), beta(3), gamma(1), delta(1), epsilon(1). F(0) has four main subunits: a(1), b(1), b'(1) and c(10-14). The alpha and beta chains form an alternating ring which encloses part of the gamma chain. F(1) is attached to F(0) by a central stalk formed by the gamma and epsilon chains, while a peripheral stalk is formed by the delta, b and b' chains.

Its subcellular location is the plastid. It is found in the chloroplast thylakoid membrane. Its function is as follows. F(1)F(0) ATP synthase produces ATP from ADP in the presence of a proton or sodium gradient. F-type ATPases consist of two structural domains, F(1) containing the extramembraneous catalytic core and F(0) containing the membrane proton channel, linked together by a central stalk and a peripheral stalk. During catalysis, ATP synthesis in the catalytic domain of F(1) is coupled via a rotary mechanism of the central stalk subunits to proton translocation. In terms of biological role, component of the F(0) channel, it forms part of the peripheral stalk, linking F(1) to F(0). This chain is ATP synthase subunit b, chloroplastic, found in Glycine max (Soybean).